Here is a 449-residue protein sequence, read N- to C-terminus: UDP-N-acetylmuramoylalanine--D-glutamate ligase (449 aa).

Glycine 118–threonine 124 is an ATP binding site.

The protein belongs to the MurCDEF family.

The protein localises to the cytoplasm. It catalyses the reaction UDP-N-acetyl-alpha-D-muramoyl-L-alanine + D-glutamate + ATP = UDP-N-acetyl-alpha-D-muramoyl-L-alanyl-D-glutamate + ADP + phosphate + H(+). Its pathway is cell wall biogenesis; peptidoglycan biosynthesis. In terms of biological role, cell wall formation. Catalyzes the addition of glutamate to the nucleotide precursor UDP-N-acetylmuramoyl-L-alanine (UMA). The protein is UDP-N-acetylmuramoylalanine--D-glutamate ligase of Staphylococcus saprophyticus subsp. saprophyticus (strain ATCC 15305 / DSM 20229 / NCIMB 8711 / NCTC 7292 / S-41).